The primary structure comprises 121 residues: uncharacterized protein (121 aa).

The tract at residues 100-121 (KSFSNTKDGKKNDDDNNSSSKS) is disordered.

This is an uncharacterized protein from Mycoplasma pneumoniae (strain ATCC 29342 / M129 / Subtype 1) (Mycoplasmoides pneumoniae).